A 152-amino-acid polypeptide reads, in one-letter code: Large-conductance mechanosensitive channel (152 aa).

2 consecutive transmembrane segments (helical) span residues 14–34 (VIDLAIGVVIGGAFGKIVTSL) and 81–101 (GLFLNNLINFLIIAFSIFIVI).

The protein belongs to the MscL family. Homopentamer.

It is found in the cell membrane. Functionally, channel that opens in response to stretch forces in the membrane lipid bilayer. May participate in the regulation of osmotic pressure changes within the cell. The protein is Large-conductance mechanosensitive channel of Clostridium perfringens (strain ATCC 13124 / DSM 756 / JCM 1290 / NCIMB 6125 / NCTC 8237 / Type A).